A 341-amino-acid chain; its full sequence is ATPase GET3 (341 aa).

Position 34–41 (34–41 (KGGVGKTT)) interacts with ATP. The active site involves Asp63. ATP is bound by residues Glu245 and Asn272. Zn(2+)-binding residues include Cys283 and Cys286.

Belongs to the arsA ATPase family. As to quaternary structure, homodimer.

The protein localises to the cytoplasm. The protein resides in the endoplasmic reticulum. In terms of biological role, ATPase required for the post-translational delivery of tail-anchored (TA) proteins to the endoplasmic reticulum. Recognizes and selectively binds the transmembrane domain of TA proteins in the cytosol. This complex then targets to the endoplasmic reticulum by membrane-bound receptors, where the tail-anchored protein is released for insertion. This process is regulated by ATP binding and hydrolysis. ATP binding drives the homodimer towards the closed dimer state, facilitating recognition of newly synthesized TA membrane proteins. ATP hydrolysis is required for insertion. Subsequently, the homodimer reverts towards the open dimer state, lowering its affinity for the membrane-bound receptor, and returning it to the cytosol to initiate a new round of targeting. The chain is ATPase GET3 from Ajellomyces capsulatus (strain G186AR / H82 / ATCC MYA-2454 / RMSCC 2432) (Darling's disease fungus).